A 1420-amino-acid polypeptide reads, in one-letter code: DNA-directed RNA polymerase subunit beta' (1420 aa).

Zn(2+) is bound by residues C70, C72, C85, and C88. Residues D464, D466, and D468 each contribute to the Mg(2+) site. The Zn(2+) site is built by C823, C897, C904, and C907.

The protein belongs to the RNA polymerase beta' chain family. As to quaternary structure, the RNAP catalytic core consists of 2 alpha, 1 beta, 1 beta' and 1 omega subunit. When a sigma factor is associated with the core the holoenzyme is formed, which can initiate transcription. The cofactor is Mg(2+). Requires Zn(2+) as cofactor.

It catalyses the reaction RNA(n) + a ribonucleoside 5'-triphosphate = RNA(n+1) + diphosphate. Its function is as follows. DNA-dependent RNA polymerase catalyzes the transcription of DNA into RNA using the four ribonucleoside triphosphates as substrates. This is DNA-directed RNA polymerase subunit beta' from Polynucleobacter necessarius subsp. necessarius (strain STIR1).